The sequence spans 85 residues: Beta-insect depressant toxin LqhIT2 (85 aa).

A signal peptide spans 1–21 (MKLLLLLIVSASMLIESLVNA). The LCN-type CS-alpha/beta domain occupies 22 to 82 (DGYIKRRDGC…TWKSETNTCG (61 aa)). 4 disulfides stabilise this stretch: Cys31-Cys81, Cys35-Cys56, Cys42-Cys63, and Cys46-Cys65. The residue at position 82 (Gly82) is a Glycine amide.

Belongs to the long (4 C-C) scorpion toxin superfamily. Sodium channel inhibitor family. Beta subfamily. As to expression, expressed by the venom gland.

Its subcellular location is the secreted. Depressant insect beta-toxins cause a transient contraction paralysis followed by a slow flaccid paralysis. They bind voltage-independently at site-4 of sodium channels (Nav) and shift the voltage of activation toward more negative potentials thereby affecting sodium channel activation and promoting spontaneous and repetitive firing. This toxin is active only on insects. The protein is Beta-insect depressant toxin LqhIT2 of Leiurus hebraeus (Hebrew deathstalker scorpion).